We begin with the raw amino-acid sequence, 623 residues long: V-type proton ATPase catalytic subunit A (623 aa).

G252–T259 serves as a coordination point for ATP.

Belongs to the ATPase alpha/beta chains family. In terms of assembly, V-ATPase is a heteromultimeric enzyme composed of a peripheral catalytic V1 complex (main components: subunits A, B, C, D, E, and F) attached to an integral membrane V0 proton pore complex (main component: the proteolipid protein).

The catalysed reaction is ATP + H2O + 4 H(+)(in) = ADP + phosphate + 5 H(+)(out). Its function is as follows. Catalytic subunit of the peripheral V1 complex of vacuolar ATPase. V-ATPase vacuolar ATPase is responsible for acidifying a variety of intracellular compartments in eukaryotic cells. The sequence is that of V-type proton ATPase catalytic subunit A from Daucus carota (Wild carrot).